A 586-amino-acid chain; its full sequence is MTIDDELRDRIKRSAKKHALLNAVKHKSDAEVGAIMGPLMGENPEFRPHGDAIPGIVSGVVSQINDLSVDERRSRLETIAPEALTDIESEDTTDTYDLPSLPGVSDDEPTQSVRMRAAPNPNGPWHIGHARMPAVIGTYSNRYDGSFIIRFDDTDPETKRPDLDAYDDILEDVAYLGFEPDDVIRASDRLELYYARARELIDAGGAYTCSCSGEHFSKLKNAGEACPHREKSVNQTQTEFEAMIHGEYSAGEMVLRVRTDIEHKNPALRDWVAFRLIDTPHPRPQAADYRCWPMLDFQSGIDDHETGVTHIIRGIDLQDSAKRQRFVYDYFDWEYPEVVHWGHINVDEYDVSLSTSTLIEKIETGELDGWDDPRAPTLQSLRRRGIKGDAIVEAMINLGTSTTNVELSMSSIYSNNRQHIDAKADRYFFVRNGETFTLETASEDTIAGHPPLHPDNPERGERVVPVTDGITIEPADVPADGDRVWLKGYACVRRDDNHFRTTNDGIEVVREGDVDVIHWAPAPESSASISVRMRTPDGDITGIAEPDLTDAEIDDIVQFERVGFARIDTKDEQSLDTDMTVYWTHP.

Positions 84–111 (LTDIESEDTTDTYDLPSLPGVSDDEPTQ) are disordered. Residues 85–94 (TDIESEDTTD) are compositionally biased toward acidic residues. A 'HIGH' region motif is present at residues 119-129 (PNPNGPWHIGH).

Belongs to the class-I aminoacyl-tRNA synthetase family. Glutamate--tRNA ligase type 2 subfamily.

The protein resides in the cytoplasm. It carries out the reaction tRNA(Glu) + L-glutamate + ATP = L-glutamyl-tRNA(Glu) + AMP + diphosphate. In terms of biological role, catalyzes the attachment of glutamate to tRNA(Glu) in a two-step reaction: glutamate is first activated by ATP to form Glu-AMP and then transferred to the acceptor end of tRNA(Glu). The protein is Glutamate--tRNA ligase of Haloquadratum walsbyi (strain DSM 16790 / HBSQ001).